Consider the following 247-residue polypeptide: Carboxy-S-adenosyl-L-methionine synthase (247 aa).

S-adenosyl-L-methionine contacts are provided by residues tyrosine 39, 64–66, 89–90, 117–118, asparagine 132, and arginine 199; these read GCS, DN, and DI.

The protein belongs to the class I-like SAM-binding methyltransferase superfamily. Cx-SAM synthase family. Homodimer.

The enzyme catalyses prephenate + S-adenosyl-L-methionine = carboxy-S-adenosyl-L-methionine + 3-phenylpyruvate + H2O. In terms of biological role, catalyzes the conversion of S-adenosyl-L-methionine (SAM) to carboxy-S-adenosyl-L-methionine (Cx-SAM). The sequence is that of Carboxy-S-adenosyl-L-methionine synthase from Escherichia coli O7:K1 (strain IAI39 / ExPEC).